An 85-amino-acid chain; its full sequence is Small ribosomal subunit protein bS16 (85 aa).

This sequence belongs to the bacterial ribosomal protein bS16 family.

The sequence is that of Small ribosomal subunit protein bS16 from Nitrosomonas eutropha (strain DSM 101675 / C91 / Nm57).